The sequence spans 187 residues: Photosystem I assembly protein Ycf4 (187 aa).

Transmembrane regions (helical) follow at residues 25–47 (YWWA…SSYL) and 62–84 (FVPQ…IYLW).

This sequence belongs to the Ycf4 family.

The protein localises to the plastid. Its subcellular location is the chloroplast thylakoid membrane. Seems to be required for the assembly of the photosystem I complex. This Mesostigma viride (Green alga) protein is Photosystem I assembly protein Ycf4.